The chain runs to 548 residues: Chaperonin GroEL (548 aa).

Residues 30-33, lysine 51, 87-91, glycine 415, 479-481, and aspartate 495 contribute to the ATP site; these read TLGP, DGTTT, and NAA.

It belongs to the chaperonin (HSP60) family. In terms of assembly, forms a cylinder of 14 subunits composed of two heptameric rings stacked back-to-back. Interacts with the co-chaperonin GroES.

It localises to the cytoplasm. It carries out the reaction ATP + H2O + a folded polypeptide = ADP + phosphate + an unfolded polypeptide.. Its function is as follows. Together with its co-chaperonin GroES, plays an essential role in assisting protein folding. The GroEL-GroES system forms a nano-cage that allows encapsulation of the non-native substrate proteins and provides a physical environment optimized to promote and accelerate protein folding. The sequence is that of Chaperonin GroEL from Lawsonia intracellularis (strain PHE/MN1-00).